A 416-amino-acid polypeptide reads, in one-letter code: Serine hydroxymethyltransferase (416 aa).

Residues leucine 121 and 125-127 (GHL) contribute to the (6S)-5,6,7,8-tetrahydrofolate site. At lysine 229 the chain carries N6-(pyridoxal phosphate)lysine. (6S)-5,6,7,8-tetrahydrofolate-binding positions include glutamate 245 and 354–356 (SPF).

The protein belongs to the SHMT family. As to quaternary structure, homodimer. Requires pyridoxal 5'-phosphate as cofactor.

The protein localises to the cytoplasm. The catalysed reaction is (6R)-5,10-methylene-5,6,7,8-tetrahydrofolate + glycine + H2O = (6S)-5,6,7,8-tetrahydrofolate + L-serine. It participates in one-carbon metabolism; tetrahydrofolate interconversion. It functions in the pathway amino-acid biosynthesis; glycine biosynthesis; glycine from L-serine: step 1/1. Functionally, catalyzes the reversible interconversion of serine and glycine with tetrahydrofolate (THF) serving as the one-carbon carrier. This reaction serves as the major source of one-carbon groups required for the biosynthesis of purines, thymidylate, methionine, and other important biomolecules. Also exhibits THF-independent aldolase activity toward beta-hydroxyamino acids, producing glycine and aldehydes, via a retro-aldol mechanism. The polypeptide is Serine hydroxymethyltransferase (Aliivibrio salmonicida (strain LFI1238) (Vibrio salmonicida (strain LFI1238))).